A 38-amino-acid chain; its full sequence is Large ribosomal subunit protein bL36 (38 aa).

It belongs to the bacterial ribosomal protein bL36 family.

This is Large ribosomal subunit protein bL36 from Fervidobacterium nodosum (strain ATCC 35602 / DSM 5306 / Rt17-B1).